A 141-amino-acid chain; its full sequence is Nucleoside triphosphatase NudI (141 aa).

In terms of domain architecture, Nudix hydrolase spans Met-1–Leu-141. The Nudix box signature appears at Gly-38–Gly-59.

This sequence belongs to the Nudix hydrolase family. NudI subfamily. As to quaternary structure, monomer. The cofactor is Mg(2+).

The enzyme catalyses a ribonucleoside 5'-triphosphate + H2O = a ribonucleoside 5'-phosphate + diphosphate + H(+). The catalysed reaction is a 2'-deoxyribonucleoside 5'-triphosphate + H2O = a 2'-deoxyribonucleoside 5'-phosphate + diphosphate + H(+). It carries out the reaction dUTP + H2O = dUMP + diphosphate + H(+). It catalyses the reaction dTTP + H2O = dTMP + diphosphate + H(+). The enzyme catalyses dCTP + H2O = dCMP + diphosphate + H(+). Functionally, catalyzes the hydrolysis of nucleoside triphosphates, with a preference for pyrimidine deoxynucleoside triphosphates (dUTP, dTTP and dCTP). The polypeptide is Nucleoside triphosphatase NudI (Escherichia coli O9:H4 (strain HS)).